A 98-amino-acid chain; its full sequence is NADH-ubiquinone oxidoreductase chain 4L (98 aa).

Transmembrane regions (helical) follow at residues 1-21 (MPSI…GMLV), 29-49 (SLLC…LTAL), and 61-81 (IILL…LVMV).

The protein belongs to the complex I subunit 4L family. In terms of assembly, core subunit of respiratory chain NADH dehydrogenase (Complex I) which is composed of 45 different subunits.

Its subcellular location is the mitochondrion inner membrane. It catalyses the reaction a ubiquinone + NADH + 5 H(+)(in) = a ubiquinol + NAD(+) + 4 H(+)(out). In terms of biological role, core subunit of the mitochondrial membrane respiratory chain NADH dehydrogenase (Complex I) which catalyzes electron transfer from NADH through the respiratory chain, using ubiquinone as an electron acceptor. Part of the enzyme membrane arm which is embedded in the lipid bilayer and involved in proton translocation. This is NADH-ubiquinone oxidoreductase chain 4L (MT-ND4L) from Oryctolagus cuniculus (Rabbit).